Consider the following 564-residue polypeptide: Copine-8 (564 aa).

C2 domains lie at 1–133 (MDSR…RLEK) and 142–265 (KCGT…FNVY). Ca(2+) is bound by residues D39, D45, D99, D101, S104, K109, D111, D173, D179, D235, D237, and D243. At S260 the chain carries Phosphoserine. Residues 309-510 (NFTVAIDFTA…VQFVPFRDYI (202 aa)) form the VWFA domain.

Belongs to the copine family. It depends on Ca(2+) as a cofactor.

Functionally, probable calcium-dependent phospholipid-binding protein that may play a role in calcium-mediated intracellular processes. This Homo sapiens (Human) protein is Copine-8.